The sequence spans 279 residues: uncharacterized protein (279 aa).

Helical transmembrane passes span 1–21, 38–58, and 131–151; these read MGFIKSTLLATVTVFVGLCGI, FACHTFLAISSAYGVIASVVA, and SLRYVPILGWFMILSDVVFID.

This sequence belongs to the 1-acyl-sn-glycerol-3-phosphate acyltransferase family.

It localises to the endoplasmic reticulum membrane. This is an uncharacterized protein from Schizosaccharomyces pombe (strain 972 / ATCC 24843) (Fission yeast).